The sequence spans 301 residues: Putative phosphoenolpyruvate synthase regulatory protein (301 aa).

Over residues 1 to 24 (MSEPVAPDGAQPAPAGATPQPLQP) the composition is skewed to low complexity. A disordered region spans residues 1 to 27 (MSEPVAPDGAQPAPAGATPQPLQPIAG). An ADP-binding site is contributed by 181-188 (GVSRSGKT).

Belongs to the pyruvate, phosphate/water dikinase regulatory protein family. PSRP subfamily.

The catalysed reaction is [pyruvate, water dikinase] + ADP = [pyruvate, water dikinase]-phosphate + AMP + H(+). The enzyme catalyses [pyruvate, water dikinase]-phosphate + phosphate + H(+) = [pyruvate, water dikinase] + diphosphate. Its function is as follows. Bifunctional serine/threonine kinase and phosphorylase involved in the regulation of the phosphoenolpyruvate synthase (PEPS) by catalyzing its phosphorylation/dephosphorylation. This chain is Putative phosphoenolpyruvate synthase regulatory protein, found in Cupriavidus pinatubonensis (strain JMP 134 / LMG 1197) (Cupriavidus necator (strain JMP 134)).